Here is a 607-residue protein sequence, read N- to C-terminus: Chaperone protein DnaK (607 aa).

A Phosphothreonine; by autocatalysis modification is found at Thr174. The tract at residues 571 to 607 (AAMYQKQAQQQQPGPGPDAGKDKDDKDKTVDADYEVK) is disordered. Residues 589–607 (AGKDKDDKDKTVDADYEVK) show a composition bias toward basic and acidic residues.

It belongs to the heat shock protein 70 family.

Acts as a chaperone. In Desulforudis audaxviator (strain MP104C), this protein is Chaperone protein DnaK.